Consider the following 77-residue polypeptide: Translation initiation factor IF-1, chloroplastic (77 aa).

The S1-like domain maps to 1–71; sequence MKEQKWIHEG…TRGRIIYRLR (71 aa).

Belongs to the IF-1 family. Component of the 30S ribosomal translation pre-initiation complex which assembles on the 30S ribosome in the order IF-2 and IF-3, IF-1 and N-formylmethionyl-tRNA(fMet); mRNA recruitment can occur at any time during PIC assembly.

It localises to the plastid. The protein resides in the chloroplast. In terms of biological role, one of the essential components for the initiation of protein synthesis. Stabilizes the binding of IF-2 and IF-3 on the 30S subunit to which N-formylmethionyl-tRNA(fMet) subsequently binds. Helps modulate mRNA selection, yielding the 30S pre-initiation complex (PIC). Upon addition of the 50S ribosomal subunit IF-1, IF-2 and IF-3 are released leaving the mature 70S translation initiation complex. This Lactuca sativa (Garden lettuce) protein is Translation initiation factor IF-1, chloroplastic.